A 106-amino-acid chain; its full sequence is Thioredoxin (106 aa).

In terms of domain architecture, Thioredoxin spans 2–106 (VQVISNLDEF…LESLVQKSLA (105 aa)). Active-site nucleophile residues include Cys-30 and Cys-33. Residues Cys-30 and Cys-33 are joined by a disulfide bond.

It belongs to the thioredoxin family.

Participates in various redox reactions through the reversible oxidation of its active center dithiol to a disulfide and catalyzes dithiol-disulfide exchange reactions. The sequence is that of Thioredoxin from Coprinus comatus (Shaggy mane).